The following is a 182-amino-acid chain: Peptidyl-tRNA hydrolase (182 aa).

Position 14 (Tyr-14) interacts with tRNA. His-19 serves as the catalytic Proton acceptor. TRNA is bound by residues Phe-60, Asn-62, and Asn-106.

It belongs to the PTH family. Monomer.

The protein resides in the cytoplasm. It carries out the reaction an N-acyl-L-alpha-aminoacyl-tRNA + H2O = an N-acyl-L-amino acid + a tRNA + H(+). Its function is as follows. Hydrolyzes ribosome-free peptidyl-tRNAs (with 1 or more amino acids incorporated), which drop off the ribosome during protein synthesis, or as a result of ribosome stalling. Catalyzes the release of premature peptidyl moieties from peptidyl-tRNA molecules trapped in stalled 50S ribosomal subunits, and thus maintains levels of free tRNAs and 50S ribosomes. The chain is Peptidyl-tRNA hydrolase from Campylobacter concisus (strain 13826).